Consider the following 251-residue polypeptide: Triosephosphate isomerase (251 aa).

A substrate-binding site is contributed by 9 to 11 (NWK). Catalysis depends on His-95, which acts as the Electrophile. Glu-167 acts as the Proton acceptor in catalysis. Substrate contacts are provided by residues Gly-173, Ser-212, and 233–234 (GG).

This sequence belongs to the triosephosphate isomerase family. Homodimer.

It is found in the cytoplasm. It catalyses the reaction D-glyceraldehyde 3-phosphate = dihydroxyacetone phosphate. It functions in the pathway carbohydrate biosynthesis; gluconeogenesis. The protein operates within carbohydrate degradation; glycolysis; D-glyceraldehyde 3-phosphate from glycerone phosphate: step 1/1. In terms of biological role, involved in the gluconeogenesis. Catalyzes stereospecifically the conversion of dihydroxyacetone phosphate (DHAP) to D-glyceraldehyde-3-phosphate (G3P). The chain is Triosephosphate isomerase from Pseudomonas savastanoi pv. phaseolicola (strain 1448A / Race 6) (Pseudomonas syringae pv. phaseolicola (strain 1448A / Race 6)).